The sequence spans 340 residues: tRNA N6-adenosine threonylcarbamoyltransferase (340 aa).

Residues histidine 111 and histidine 115 each coordinate Fe cation. Substrate contacts are provided by residues valine 133–glycine 137, aspartate 166, glycine 179, aspartate 183, and asparagine 272. Fe cation is bound at residue aspartate 300.

Belongs to the KAE1 / TsaD family. The cofactor is Fe(2+).

It localises to the cytoplasm. The catalysed reaction is L-threonylcarbamoyladenylate + adenosine(37) in tRNA = N(6)-L-threonylcarbamoyladenosine(37) in tRNA + AMP + H(+). Required for the formation of a threonylcarbamoyl group on adenosine at position 37 (t(6)A37) in tRNAs that read codons beginning with adenine. Is involved in the transfer of the threonylcarbamoyl moiety of threonylcarbamoyl-AMP (TC-AMP) to the N6 group of A37, together with TsaE and TsaB. TsaD likely plays a direct catalytic role in this reaction. The sequence is that of tRNA N6-adenosine threonylcarbamoyltransferase from Geobacter sulfurreducens (strain ATCC 51573 / DSM 12127 / PCA).